A 681-amino-acid chain; its full sequence is Angiomotin-like 2b (681 aa).

The span at 68–84 (GGGAASSSQSSSESLSQ) shows a compositional bias: low complexity. The interval 68–106 (GGGAASSSQSSSESLSQDEPHSPQLSTRQEPQGQEHQVD) is disordered. Residues 90–102 (PQLSTRQEPQGQE) show a composition bias toward polar residues. Y126 carries the post-translational modification Phosphotyrosine; by FGFR1. Coiled-coil stretches lie at residues 268–319 (NACS…LMKG), 362–441 (IEKL…LQAT), and 481–508 (VYTL…WEQK). A disordered region spans residues 589-618 (QLGALQPATADSSIISSHSTPAHTAQGKER). Over residues 597–611 (TADSSIISSHSTPAH) the composition is skewed to polar residues. The PDZ-binding motif lies at 678–681 (EIFI).

This sequence belongs to the angiomotin family. As to quaternary structure, interacts with SRC. Phosphorylation at Tyr-126 is necessary for efficient binding to SRC and synergistically functioning with SRC to activate the downstream MAPK pathway. In terms of tissue distribution, expressed in endothelial cells.

The protein resides in the recycling endosome. It is found in the cytoplasm. It localises to the cell projection. Its subcellular location is the podosome. The protein localises to the cell junction. Functionally, required for proper architecture of actin filaments and for cell movements during embryogenesis. Plays a role in the radial actin fiber architecture in skin epithelial cells, thereby maintains cell geometry, size and cell interconnectivity within the skin. Plays an important role in coupling actin fibers to cell junctions in endothelial cells and is therefore required for correct endothelial cell morphology and maintenance of dorsal aorta lumen expansion during embryogenesis. May further play a role in the polarity, proliferation and migration of endothelial cells, and therefore participates in angiogenesis. May regulate the translocation of phosphorylated SRC to peripheral cell-matrix adhesion sites. The chain is Angiomotin-like 2b from Danio rerio (Zebrafish).